The primary structure comprises 216 residues: Outer-membrane lipoprotein LolB (216 aa).

An N-terminal signal peptide occupies residues 1 to 24 (MNNLNYFTKISASCAALALMTLAG). C25 carries the N-palmitoyl cysteine lipid modification. The S-diacylglycerol cysteine moiety is linked to residue C25.

The protein belongs to the LolB family. As to quaternary structure, monomer.

The protein resides in the cell outer membrane. In terms of biological role, plays a critical role in the incorporation of lipoproteins in the outer membrane after they are released by the LolA protein. This chain is Outer-membrane lipoprotein LolB, found in Shewanella loihica (strain ATCC BAA-1088 / PV-4).